The primary structure comprises 68 residues: Pleurocidin (68 aa).

A signal peptide spans 1-22 (MKFTATFLMMAIFVLMVEPGEC). The propeptide occupies 48–68 (GDKQELNKRAVDEDPNVIVFE).

Belongs to the pleurocidin family. As to expression, goblet cells.

It localises to the secreted. Its subcellular location is the membrane. Its function is as follows. Antimicrobial peptide with potent activity against Gram-positive and Gram-negative bacteria. Activity against E.coli and B.subtilis. Weaker activity against L.mucor, s.marcescens and P.aeruginosa. May play a role in innate host defense. This chain is Pleurocidin (ple1), found in Pseudopleuronectes americanus (Winter flounder).